A 58-amino-acid chain; its full sequence is Large ribosomal subunit protein uL30 (58 aa).

This sequence belongs to the universal ribosomal protein uL30 family. Part of the 50S ribosomal subunit.

The chain is Large ribosomal subunit protein uL30 from Pseudomonas fluorescens (strain ATCC BAA-477 / NRRL B-23932 / Pf-5).